A 226-amino-acid chain; its full sequence is Leucyl/phenylalanyl-tRNA--protein transferase (226 aa).

The protein belongs to the L/F-transferase family.

It localises to the cytoplasm. It catalyses the reaction N-terminal L-lysyl-[protein] + L-leucyl-tRNA(Leu) = N-terminal L-leucyl-L-lysyl-[protein] + tRNA(Leu) + H(+). It carries out the reaction N-terminal L-arginyl-[protein] + L-leucyl-tRNA(Leu) = N-terminal L-leucyl-L-arginyl-[protein] + tRNA(Leu) + H(+). The enzyme catalyses L-phenylalanyl-tRNA(Phe) + an N-terminal L-alpha-aminoacyl-[protein] = an N-terminal L-phenylalanyl-L-alpha-aminoacyl-[protein] + tRNA(Phe). Its function is as follows. Functions in the N-end rule pathway of protein degradation where it conjugates Leu, Phe and, less efficiently, Met from aminoacyl-tRNAs to the N-termini of proteins containing an N-terminal arginine or lysine. The sequence is that of Leucyl/phenylalanyl-tRNA--protein transferase from Azotobacter vinelandii (strain DJ / ATCC BAA-1303).